The sequence spans 377 residues: Succinyl-diaminopimelate desuccinylase (377 aa).

H67 contacts Zn(2+). Residue D69 is part of the active site. D100 is a Zn(2+) binding site. E134 (proton acceptor) is an active-site residue. E135, E163, and H349 together coordinate Zn(2+).

This sequence belongs to the peptidase M20A family. DapE subfamily. Homodimer. Requires Zn(2+) as cofactor. The cofactor is Co(2+).

The enzyme catalyses N-succinyl-(2S,6S)-2,6-diaminopimelate + H2O = (2S,6S)-2,6-diaminopimelate + succinate. It participates in amino-acid biosynthesis; L-lysine biosynthesis via DAP pathway; LL-2,6-diaminopimelate from (S)-tetrahydrodipicolinate (succinylase route): step 3/3. Its function is as follows. Catalyzes the hydrolysis of N-succinyl-L,L-diaminopimelic acid (SDAP), forming succinate and LL-2,6-diaminopimelate (DAP), an intermediate involved in the bacterial biosynthesis of lysine and meso-diaminopimelic acid, an essential component of bacterial cell walls. This chain is Succinyl-diaminopimelate desuccinylase, found in Actinobacillus pleuropneumoniae serotype 5b (strain L20).